Consider the following 1004-residue polypeptide: Retrovirus-related Pol polyprotein from type-1 retrotransposable element R1 (1004 aa).

Residues 450-717 (QCLLESYFPQ…SEVKHLGIFV (268 aa)) form the Reverse transcriptase domain. A nucleic acid-binding endonuclease region spans residues 853–1004 (LSGSQFKELL…RLMRGMRIRE (152 aa)).

The catalysed reaction is DNA(n) + a 2'-deoxyribonucleoside 5'-triphosphate = DNA(n+1) + diphosphate. The polypeptide is Retrovirus-related Pol polyprotein from type-1 retrotransposable element R1 (Bradysia coprophila (Dark-winged fungus gnat)).